Reading from the N-terminus, the 291-residue chain is Probable peptide ABC transporter permease protein y4tQ (291 aa).

Helical transmembrane passes span 28 to 48 (LVLL…AAPL), 92 to 112 (LIVG…IGVI), 137 to 157 (LLAI…IVAI), 213 to 233 (ATVC…GVGV), and 249 to 269 (LFLA…AVTV). The 189-residue stretch at 88-276 (ARISLIVGLL…VTVLAVNLLG (189 aa)) folds into the ABC transmembrane type-1 domain.

This sequence belongs to the binding-protein-dependent transport system permease family. OppBC subfamily.

The protein resides in the cell inner membrane. Functionally, probably part of the binding-protein-dependent transport system y4tOPQRS for a peptide. Probably responsible for the translocation of the substrate across the membrane. This is Probable peptide ABC transporter permease protein y4tQ from Sinorhizobium fredii (strain NBRC 101917 / NGR234).